A 474-amino-acid polypeptide reads, in one-letter code: Probable phenylalanine--tRNA ligase alpha subunit (474 aa).

A contains the major tRNA-Phe binding sites region spans residues 1–150 (MSLSQKILEL…KRKLIYQAKE (150 aa)). Residues T308, 350–352 (QVE), and Y390 each bind L-phenylalanine. Position 392 (E392) interacts with Mg(2+). F416 is an L-phenylalanine binding site.

It belongs to the class-II aminoacyl-tRNA synthetase family. Phe-tRNA synthetase alpha subunit type 2 subfamily. Tetramer of two alpha and two beta subunits. Mg(2+) serves as cofactor.

It localises to the cytoplasm. It carries out the reaction tRNA(Phe) + L-phenylalanine + ATP = L-phenylalanyl-tRNA(Phe) + AMP + diphosphate + H(+). In Vairimorpha ceranae (strain BRL01) (Microsporidian parasite), this protein is Probable phenylalanine--tRNA ligase alpha subunit.